The primary structure comprises 321 residues: Peptidase 1 (321 aa).

The signal sequence occupies residues 1–18 (MKIILAIASLLVLSAVYA). Positions 19-98 (RPASIKTFEE…LKTQFDLNAE (80 aa)) are excised as a propeptide. N34 carries N-linked (GlcNAc...) asparagine glycosylation. C130 and C170 are oxidised to a cystine. C133 is a catalytic residue. An N-linked (GlcNAc...) asparagine glycan is attached at N151. Residues H269 and N289 contribute to the active site.

Belongs to the peptidase C1 family.

It localises to the secreted. It carries out the reaction Broad endopeptidase specificity.. Probable thiol protease. The sequence is that of Peptidase 1 (EURM1) from Euroglyphus maynei (Mayne's house dust mite).